A 96-amino-acid chain; its full sequence is Co-chaperonin GroES (96 aa).

It belongs to the GroES chaperonin family. As to quaternary structure, heptamer of 7 subunits arranged in a ring. Interacts with the chaperonin GroEL.

The protein resides in the cytoplasm. Its function is as follows. Together with the chaperonin GroEL, plays an essential role in assisting protein folding. The GroEL-GroES system forms a nano-cage that allows encapsulation of the non-native substrate proteins and provides a physical environment optimized to promote and accelerate protein folding. GroES binds to the apical surface of the GroEL ring, thereby capping the opening of the GroEL channel. The polypeptide is Co-chaperonin GroES (Actinobacillus pleuropneumoniae serotype 5b (strain L20)).